A 347-amino-acid polypeptide reads, in one-letter code: Ryncolin-3 (347 aa).

The N-terminal stretch at 1–19 (MKPWAAFHLIFLVASSVEG) is a signal peptide. One can recognise a Collagen-like domain in the interval 57 to 114 (GIPGVPGINGSEGLKGDPGPQGLPGETGFDGIPGVAGPKGDKGDQGDKGDKGDKGDKG). The disordered stretch occupies residues 62–115 (PGINGSEGLKGDPGPQGLPGETGFDGIPGVAGPKGDKGDQGDKGDKGDKGDKGD). A compositionally biased stretch (basic and acidic residues) spans 95–115 (KGDKGDQGDKGDKGDKGDKGD). The Fibrinogen C-terminal domain occupies 121-341 (DCPPTDVEVR…YADMKIRPQQ (221 aa)). 2 disulfides stabilise this stretch: Cys132-Cys160 and Cys284-Cys297.

The protein belongs to the ficolin lectin family. Veficolin subfamily. In terms of processing, hydroxylated. Expressed by the venom duct.

It localises to the secreted. Initiates complement activation and/or interferes in platelet aggregation and/or blood coagulation. This Cerberus rynchops (Dog-faced water snake) protein is Ryncolin-3.